The sequence spans 451 residues: Probable DNA polymerase delta small subunit (451 aa).

Belongs to the DNA polymerase delta/II small subunit family. In terms of assembly, heterodimer with subunits of 125 kDa and 50 kDa.

The protein resides in the nucleus. The enzyme catalyses DNA(n) + a 2'-deoxyribonucleoside 5'-triphosphate = DNA(n+1) + diphosphate. In terms of biological role, the function of the small subunit is not yet clear. This is Probable DNA polymerase delta small subunit from Caenorhabditis elegans.